The primary structure comprises 563 residues: MGTDTAQATARPVRTQQPGRLIVDWLTTTDHKKIGHLYLITSFAFFLIGGVMALVMRAELARPGMQIVDNNQFNQLFTLHGTIMLLLFATPTFAGFANEIMPLQIGSPDVAFPRLNMLSYWLFLFGGLIVLGSLAVPSGPAAFGWFAYAPLNSLERSPGIGADMWIMGLALAGFGTILGSVNFLTTIIGMRAPGMTMFRMPIFTWNTLFTSILVLMAFPVLAAALLVLEADRRFGSQVFDAANGGALLWQHLFWFFGHPEVYIIALPFFGIITEIIPVFSRKPIFGYLTLIGATAAITGLSVVVWAHHMFATGAVLLPFFSFMSFLIAVPTGVKFFNWTGTMLKGSLSFETPMLWATGFLVSFLFGGLTGVILASPPLDFHVTDSYFVVAHFHYVVFGTVVFATFGGFYFWWPKFTGKMLDERLGKIHFWTLFVGFHTTFLVQHWLGAEGMPRRYADYLAADGFTALNTLSTIGAFLLGMSTLPFLYNVWKTARYGRKVEVDDPWGFGRSLEWTTSCPPPRHNFVTLPRVRSESPAFDLHHPAHAGEAPQPEPKHEQADREPS.

The next 7 helical transmembrane spans lie at 34-54 (IGHL…VMAL), 76-96 (LFTL…FAGF), 117-137 (MLSY…LAVP), 164-184 (MWIM…VNFL), 208-228 (LFTS…LLVL), 252-272 (LFWF…FGII), and 284-304 (IFGY…SVVV). His80 serves as a coordination point for Fe(II)-heme a. Residues His258 and Tyr262 each contribute to the Cu cation site. Positions 258–262 (HPEVY) form a cross-link, 1'-histidyl-3'-tyrosine (His-Tyr). His307 and His308 together coordinate Cu cation. Transmembrane regions (helical) follow at residues 309-329 (MFAT…LIAV) and 353-373 (MLWA…GVIL). Heme a3 is bound at residue His391. The next 3 helical transmembrane spans lie at 392-412 (FHYV…YFWW), 427-447 (IHFW…HWLG), and 470-490 (LSTI…YNVW). A Fe(II)-heme a-binding site is contributed by His393. The segment at 536–563 (AFDLHHPAHAGEAPQPEPKHEQADREPS) is disordered. The span at 552-563 (EPKHEQADREPS) shows a compositional bias: basic and acidic residues.

Belongs to the heme-copper respiratory oxidase family. In terms of assembly, associates with subunits II, III and IV to form cytochrome c oxidase. It depends on Cu(2+) as a cofactor. The cofactor is heme.

It is found in the cell membrane. The enzyme catalyses 4 Fe(II)-[cytochrome c] + O2 + 8 H(+)(in) = 4 Fe(III)-[cytochrome c] + 2 H2O + 4 H(+)(out). Its pathway is energy metabolism; oxidative phosphorylation. Its function is as follows. Cytochrome c oxidase is the component of the respiratory chain that catalyzes the reduction of oxygen to water. Subunits 1-3 form the functional core of the enzyme complex. CO I is the catalytic subunit of the enzyme. Electrons originating in cytochrome c are transferred via the copper A center of subunit 2 and heme A of subunit 1 to the bimetallic center formed by heme A3 and copper B. This is Putative cytochrome c oxidase subunit 1-beta (ctaD2) from Streptomyces avermitilis (strain ATCC 31267 / DSM 46492 / JCM 5070 / NBRC 14893 / NCIMB 12804 / NRRL 8165 / MA-4680).